Here is a 301-residue protein sequence, read N- to C-terminus: Light-independent protochlorophyllide reductase iron-sulfur ATP-binding protein (301 aa).

Residues 1–26 are disordered; the sequence is MSNGSVPVSGIGGRGDGEGSSQVHME. Residues 44–49 and Lys73 each bind ATP; that span reads GIGKST. Ser48 is a Mg(2+) binding site. Positions 129 and 163 each coordinate [4Fe-4S] cluster. 214–215 contacts ATP; sequence NR.

Belongs to the NifH/BchL/ChlL family. In terms of assembly, homodimer. Protochlorophyllide reductase is composed of three subunits; BchL, BchN and BchB. [4Fe-4S] cluster is required as a cofactor.

It carries out the reaction chlorophyllide a + oxidized 2[4Fe-4S]-[ferredoxin] + 2 ADP + 2 phosphate = protochlorophyllide a + reduced 2[4Fe-4S]-[ferredoxin] + 2 ATP + 2 H2O. It functions in the pathway porphyrin-containing compound metabolism; bacteriochlorophyll biosynthesis (light-independent). In terms of biological role, component of the dark-operative protochlorophyllide reductase (DPOR) that uses Mg-ATP and reduced ferredoxin to reduce ring D of protochlorophyllide (Pchlide) to form chlorophyllide a (Chlide). This reaction is light-independent. The L component serves as a unique electron donor to the NB-component of the complex, and binds Mg-ATP. The sequence is that of Light-independent protochlorophyllide reductase iron-sulfur ATP-binding protein from Halorhodospira halophila (strain DSM 244 / SL1) (Ectothiorhodospira halophila (strain DSM 244 / SL1)).